The following is a 323-amino-acid chain: MPSLKSIRKRISSVKSTQKITRAMKMVAGAKLNKAQLRITELRPYAVKVQEVLSAITRDAAPAAEALAAEGIGAEGEAGAPAGGEKALHPLLVTRPERRVLLVVLTSDRGLCGAFNTNINKRAEREWKSRTEAGQEVQLAIIGRKGRDYFNRRGAPILEYLAGVWDKLNLETAQAVGAKLLAPFNKGEIDAIYLVYNEFKSAITQTVVVERLLPPAGGPAKEQEQGDEGGHGAPSAASEFLYEPDKGALLERLVPMYVDISILRALYESMASELGAKLTAMDAANKNAKEVIDNLTLEYNKARQAAITKELMEIIGGSEALKE.

A disordered region spans residues 215 to 237; the sequence is PAGGPAKEQEQGDEGGHGAPSAA. Positions 221–230 are enriched in basic and acidic residues; the sequence is KEQEQGDEGG.

The protein belongs to the ATPase gamma chain family. In terms of assembly, F-type ATPases have 2 components, CF(1) - the catalytic core - and CF(0) - the membrane proton channel. CF(1) has five subunits: alpha(3), beta(3), gamma(1), delta(1), epsilon(1). CF(0) has three main subunits: a, b and c.

The protein resides in the cell inner membrane. In terms of biological role, produces ATP from ADP in the presence of a proton gradient across the membrane. The gamma chain is believed to be important in regulating ATPase activity and the flow of protons through the CF(0) complex. In Sorangium cellulosum (strain So ce56) (Polyangium cellulosum (strain So ce56)), this protein is ATP synthase gamma chain.